The sequence spans 822 residues: Telomere length regulation protein TEL2 homolog (822 aa).

A disordered region spans residues 442-504; sequence NDDEEEQPDA…ADQEKKKSAP (63 aa). A compositionally biased stretch (polar residues) spans 465-477; it reads VSSQSVASDPGNG. Over residues 480–489 the composition is skewed to acidic residues; the sequence is SELDSDDDLT.

It belongs to the TEL2 family.

Its subcellular location is the cytoplasm. The protein resides in the membrane. It localises to the nucleus. Functionally, regulator of the DNA damage response (DDR). Part of the TTT complex that is required to stabilize protein levels of the phosphatidylinositol 3-kinase-related protein kinase (PIKK) family proteins. Promotes assembly, stabilizes and maintains the activity of TORC complexes, which regulate cell growth and survival in response to nutrient and hormonal signals. May be involved in telomere length regulation. This Danio rerio (Zebrafish) protein is Telomere length regulation protein TEL2 homolog (telo2).